A 361-amino-acid polypeptide reads, in one-letter code: MSKRAFNFCAGPAALPTAVLERAQAEFLDWQGKGLSVMEMSHRSDEYVAIAAKAEQDLRDLLGIPSNYKVLFLQGGASQQFAEIPLNLLPEGGVADYVDTGIWSRKSMEEARRFGTVNVAASAKAYDYFALPGQNEWRLSKDAAYLHYASNETIGGLQFDWVPETGEVPLVVDMSSDILSRPIDVSRFGLIYAGAQKNIGPSGLVVVIVREDLLGRARSVCPTMLDYKVAADNGSMYNTPATFSWYLSGLVFEWLKEQGGVEAMAQRNRAKKDLLYGFIDGSGFYTNPIAVDARSWMNVPFRLADEKLDKPFLAGAEERGLLNLKGHRSVGGMRASIYNAVGLDAVEALVAYMAEFEKEHG.

Arginine 43 is a binding site for L-glutamate. Residues 77 to 78 (AS), tryptophan 103, threonine 153, aspartate 173, and glutamine 196 each bind pyridoxal 5'-phosphate. Lysine 197 is modified (N6-(pyridoxal phosphate)lysine). A pyridoxal 5'-phosphate-binding site is contributed by 238 to 239 (NT).

This sequence belongs to the class-V pyridoxal-phosphate-dependent aminotransferase family. SerC subfamily. In terms of assembly, homodimer. Requires pyridoxal 5'-phosphate as cofactor.

Its subcellular location is the cytoplasm. The enzyme catalyses O-phospho-L-serine + 2-oxoglutarate = 3-phosphooxypyruvate + L-glutamate. The catalysed reaction is 4-(phosphooxy)-L-threonine + 2-oxoglutarate = (R)-3-hydroxy-2-oxo-4-phosphooxybutanoate + L-glutamate. It participates in amino-acid biosynthesis; L-serine biosynthesis; L-serine from 3-phospho-D-glycerate: step 2/3. Its pathway is cofactor biosynthesis; pyridoxine 5'-phosphate biosynthesis; pyridoxine 5'-phosphate from D-erythrose 4-phosphate: step 3/5. Functionally, catalyzes the reversible conversion of 3-phosphohydroxypyruvate to phosphoserine and of 3-hydroxy-2-oxo-4-phosphonooxybutanoate to phosphohydroxythreonine. This chain is Phosphoserine aminotransferase, found in Azotobacter vinelandii (strain DJ / ATCC BAA-1303).